A 328-amino-acid polypeptide reads, in one-letter code: Arylacetonitrilase (328 aa).

The CN hydrolase domain occupies 5–278 (VRVAVTQAEP…EGIIYADLDL (274 aa)). E45 functions as the Proton acceptor in the catalytic mechanism. K125 is an active-site residue. C160 (nucleophile) is an active-site residue.

It belongs to the carbon-nitrogen hydrolase superfamily. Nitrilase family.

The enzyme catalyses a nitrile + 2 H2O = a carboxylate + NH4(+). It carries out the reaction 4-chlorophenylacetonitrile + 2 H2O = 4-chlorophenylacetate + NH4(+). Nitrilase that hydrolyzes preferentially phenylacetonitrile and (R,S)-mandelonitrile. Also acts on dinitriles like phenylenediacetonitriles (PDAs) 1,2-PDA, 1,3-PDA, and 1,4-PDA, and cyanophenyl acetonitriles (CPAs) 2-CPA and 4-CPA. The chain is Arylacetonitrilase (nit2) from Aspergillus kawachii (strain NBRC 4308) (White koji mold).